The chain runs to 390 residues: Lipid-A-disaccharide synthase (390 aa).

It belongs to the LpxB family.

It carries out the reaction a lipid X + a UDP-2-N,3-O-bis[(3R)-3-hydroxyacyl]-alpha-D-glucosamine = a lipid A disaccharide + UDP + H(+). It functions in the pathway bacterial outer membrane biogenesis; LPS lipid A biosynthesis. Functionally, condensation of UDP-2,3-diacylglucosamine and 2,3-diacylglucosamine-1-phosphate to form lipid A disaccharide, a precursor of lipid A, a phosphorylated glycolipid that anchors the lipopolysaccharide to the outer membrane of the cell. This chain is Lipid-A-disaccharide synthase, found in Paramagnetospirillum magneticum (strain ATCC 700264 / AMB-1) (Magnetospirillum magneticum).